Consider the following 106-residue polypeptide: ATP-dependent Clp protease adapter protein ClpS (106 aa).

The protein belongs to the ClpS family. Binds to the N-terminal domain of the chaperone ClpA.

In terms of biological role, involved in the modulation of the specificity of the ClpAP-mediated ATP-dependent protein degradation. In Vibrio cholerae serotype O1 (strain ATCC 39541 / Classical Ogawa 395 / O395), this protein is ATP-dependent Clp protease adapter protein ClpS.